Consider the following 210-residue polypeptide: MRTRSAPDDTTAPGRASAAGYLDGQLLVAMPGMADERFARSVIYLCAHSAEGAMGIIVNKPAADLNMPDLLVQLDIIRQDDAIRLPNRVGHMPVLMGGPVESSRGFVLHSPDFHIDQSTLLIDDGICLTATVEILRAIAAGTGPRDAVLALGYAGWQPGQLESEIQANGWLHCPADPDLIFNAALDAKYDRALRAIGIEPAMLSMSAGHA.

Belongs to the UPF0301 (AlgH) family.

The protein is UPF0301 protein M446_6268 of Methylobacterium sp. (strain 4-46).